The following is a 266-amino-acid chain: Killer cell lectin-like receptor 5 (266 aa).

The Cytoplasmic portion of the chain corresponds to 1–44 (MSEPEVTYSTVRLHKSSGLQRLVSHEEIQGPGEAGYRKCSVPWQ). Residues 45–66 (LTVRSLGIFCFLLLVTVAVLAV) form a helical; Signal-anchor for type II membrane protein membrane-spanning segment. Residues 67 to 266 (KIFQYSQHKQ…CGKKLDHFPG (200 aa)) lie on the Extracellular side of the membrane. Asn-87 and Asn-104 each carry an N-linked (GlcNAc...) asparagine glycan. Positions 143 to 261 (GVKHWFCYGT…SYFCICGKKL (119 aa)) constitute a C-type lectin domain. Disulfide bonds link Cys-149-Cys-154, Cys-167-Cys-255, Cys-171-Cys-257, and Cys-236-Cys-249. The N-linked (GlcNAc...) asparagine glycan is linked to Asn-250.

Homodimer; disulfide-linked. In terms of tissue distribution, mostly expressed in NK cells, but also observed on NK T and memory T-cells.

The protein resides in the membrane. Its function is as follows. Receptor on natural killer (NK) cells for class I MHC. In Mus musculus (Mouse), this protein is Killer cell lectin-like receptor 5 (Klra5).